A 268-amino-acid chain; its full sequence is Indole-3-glycerol phosphate synthase (268 aa).

It belongs to the TrpC family.

The enzyme catalyses 1-(2-carboxyphenylamino)-1-deoxy-D-ribulose 5-phosphate + H(+) = (1S,2R)-1-C-(indol-3-yl)glycerol 3-phosphate + CO2 + H2O. The protein operates within amino-acid biosynthesis; L-tryptophan biosynthesis; L-tryptophan from chorismate: step 4/5. The sequence is that of Indole-3-glycerol phosphate synthase from Acinetobacter baumannii (strain SDF).